The following is a 104-amino-acid chain: Large ribosomal subunit protein bL21 (104 aa).

It belongs to the bacterial ribosomal protein bL21 family. As to quaternary structure, part of the 50S ribosomal subunit. Contacts protein L20.

In terms of biological role, this protein binds to 23S rRNA in the presence of protein L20. The polypeptide is Large ribosomal subunit protein bL21 (Streptococcus equi subsp. equi (strain 4047)).